We begin with the raw amino-acid sequence, 580 residues long: NADH-quinone oxidoreductase subunit C/D (580 aa).

Residues 1 to 171 are NADH dehydrogenase I subunit C; it reads MSFDQVIADA…PPFVLTDRLF (171 aa). Positions 195–580 are NADH dehydrogenase I subunit D; it reads ELMVLNFGPH…IDFVMSDVDR (386 aa).

The protein in the N-terminal section; belongs to the complex I 30 kDa subunit family. In the C-terminal section; belongs to the complex I 49 kDa subunit family. As to quaternary structure, NDH-1 is composed of 13 different subunits. Subunits NuoB, CD, E, F, and G constitute the peripheral sector of the complex.

The protein resides in the cell inner membrane. It catalyses the reaction a quinone + NADH + 5 H(+)(in) = a quinol + NAD(+) + 4 H(+)(out). NDH-1 shuttles electrons from NADH, via FMN and iron-sulfur (Fe-S) centers, to quinones in the respiratory chain. The immediate electron acceptor for the enzyme in this species is believed to be ubiquinone. Couples the redox reaction to proton translocation (for every two electrons transferred, four hydrogen ions are translocated across the cytoplasmic membrane), and thus conserves the redox energy in a proton gradient. This Cereibacter sphaeroides (strain ATCC 17025 / ATH 2.4.3) (Rhodobacter sphaeroides) protein is NADH-quinone oxidoreductase subunit C/D.